Consider the following 109-residue polypeptide: Cell division protein ZapA (109 aa).

The stretch at 21–99 (PDQRDALNQA…IEQALLEQGR (79 aa)) forms a coiled coil.

Belongs to the ZapA family. Type 1 subfamily. As to quaternary structure, homodimer. Interacts with FtsZ.

The protein resides in the cytoplasm. Functionally, activator of cell division through the inhibition of FtsZ GTPase activity, therefore promoting FtsZ assembly into bundles of protofilaments necessary for the formation of the division Z ring. It is recruited early at mid-cell but it is not essential for cell division. The polypeptide is Cell division protein ZapA (Shigella boydii serotype 18 (strain CDC 3083-94 / BS512)).